A 562-amino-acid polypeptide reads, in one-letter code: Adenylate kinase isoenzyme 5 (562 aa).

Adenylate kinase regions lie at residues 133–316 and 377–559; these read KIIL…MAVD and KIIF…TAID. Position 142–147 (142–147) interacts with ATP; it reads GSGKGT. Positions 162–193 are NMP 1; the sequence is SVGELLRKKIHSTSSNRKWSLIAKIITTGELA. Residues Arg168, 191 to 193, 219 to 222, and Gln226 contribute to the AMP site; these read ELA and GFPR. Residues 256-266 are LID 1; it reads KRAEQQGRPDD. Arg257 is an ATP binding site. AMP-binding residues include Arg263 and Arg274. Residue 386-391 participates in ATP binding; the sequence is GSGKGT. Residues 406 to 435 form an NMP 2 region; that stretch reads STDELLQNELSSESGRSKLIRDIMERGELV. Residues Thr407, 433–435, 462–465, and Gln469 contribute to the AMP site; these read ELV and GYPR. The segment at 499 to 509 is LID 2; the sequence is QRSRNSPQADD. Residue Arg500 coordinates ATP. Arg517 provides a ligand contact to AMP. Gly545 is a binding site for ATP.

It belongs to the adenylate kinase family. As to quaternary structure, monomer.

It localises to the cytoplasm. The enzyme catalyses AMP + ATP = 2 ADP. The catalysed reaction is a 2'-deoxyribonucleoside 5'-diphosphate + ATP = a 2'-deoxyribonucleoside 5'-triphosphate + ADP. It catalyses the reaction a ribonucleoside 5'-diphosphate + ATP = a ribonucleoside 5'-triphosphate + ADP. In terms of biological role, nucleoside monophosphate (NMP) kinase that catalyzes the reversible transfer of the terminal phosphate group between nucleoside triphosphates and monophosphates. Active on AMP and dAMP with ATP as a donor. When GTP is used as phosphate donor, the enzyme phosphorylates AMP, CMP, and to a small extent dCMP. Also displays broad nucleoside diphosphate kinase activity. The protein is Adenylate kinase isoenzyme 5 (Ak5) of Bos taurus (Bovine).